A 266-amino-acid polypeptide reads, in one-letter code: Protein crossbronx-like (266 aa).

Positions 15-178 constitute a UBC core domain; sequence KQGYHILAEY…VQEQAIASRN (164 aa).

The protein belongs to the ubiquitin-conjugating enzyme family. FTS subfamily.

The sequence is that of Protein crossbronx-like from Drosophila erecta (Fruit fly).